Consider the following 148-residue polypeptide: Pseudoazurin (148 aa).

Residues 1–25 (MMIFRALIAAATLAIAIATTLPAAA) form the signal peptide. The Plastocyanin-like domain occupies 30–118 (VKMLNSGPGG…MGMVALVVVG (89 aa)). Cu cation-binding residues include H65, C103, H106, and M111.

Requires Cu cation as cofactor.

It localises to the periplasm. The sequence is that of Pseudoazurin from Methylorubrum extorquens (strain ATCC 14718 / DSM 1338 / JCM 2805 / NCIMB 9133 / AM1) (Methylobacterium extorquens).